The following is a 158-amino-acid chain: 18.2 kDa class I heat shock protein (158 aa).

The sHSP domain maps to 44–158 (ENSAFVSTRV…PEVKTIDISG (115 aa)).

Belongs to the small heat shock protein (HSP20) family. In terms of assembly, forms oligomeric structures.

Its subcellular location is the cytoplasm. The sequence is that of 18.2 kDa class I heat shock protein (HSP18.2) from Medicago sativa (Alfalfa).